The primary structure comprises 507 residues: MIIKLSIEKGLSECTDFNKVLMFIQPLKLKLIETKTLEYLYSLISKKFKIKKSFLLYTEDGYAIPPSEEGSILKEIDKTFKVLKLNKVKKNEKTDDSGDDLMETDSDNKNKSSESDSSESDSSESESDSSESESESESNETSENESSSSSEPESSLAKKKLLIQQLKRDFQLKEKLQQEQQKQKEAQKPKEKPQQQQQQQQQQQQQQQQQQQQQQQQQQQQQQQKQKQKQQKQQIEQQHKKPPQQQQQQQQQQQQQQQQQQQQQQQQEEVPIGIDDVLTNFSYTISYDNIDELLVEEEKIKRKELEQKKRKLQSQLDNDGLANKNDNNSNNNNYNNSNNNDSNNNNTNKPLSKRQKKLLKKQQNSSQIKENYTINAINNKNDNSTNDSNNNNDNNNNNKNDTNDSNNDDNNNDKKKNNNYSTFKDLTIPNVNDKIAFQKHILLDYVLTVSEYLEGRIEKIDSDILYIRLEPGFDDFEFLDNEFFEESGALGVPVKSLISPKLISDNN.

Disordered regions lie at residues 91 to 162, 174 to 255, and 309 to 422; these read NEKT…KKLL, EKLQ…QQQQ, and KRKL…NYST. Over residues 116–143 the composition is skewed to acidic residues; that stretch reads DSSESDSSESESDSSESESESESNETSE. Residues 144–155 show a composition bias toward low complexity; the sequence is NESSSSSEPESS. A compositionally biased stretch (basic and acidic residues) spans 174 to 193; that stretch reads EKLQQEQQKQKEAQKPKEKP. 3 stretches are compositionally biased toward low complexity: residues 194–236, 243–255, and 313–350; these read QQQQ…QQIE, PQQQQQQQQQQQQ, and QSQLDNDGLANKNDNNSNNNNYNNSNNNDSNNNNTNKP. Residues 351–360 are compositionally biased toward basic residues; it reads LSKRQKKLLK. Residues 378–409 are compositionally biased toward low complexity; it reads NNKNDNSTNDSNNNNDNNNNNKNDTNDSNNDD.

This is an uncharacterized protein from Dictyostelium discoideum (Social amoeba).